The chain runs to 348 residues: Histo-blood group ABO system transferase 1 (348 aa).

Topologically, residues 1–11 (MDLRGRPKCYS) are cytoplasmic. Residues 12–32 (LHLGILPFIVLVLVFFGYGFL) form a helical; Signal-anchor for type II membrane protein membrane-spanning segment. At 33-348 (SHKIQEFRNP…VPKNHQAIRN (316 aa)) the chain is on the lumenal side. The N-linked (GlcNAc...) asparagine glycan is linked to N108. Residues 116–118 (FAI), Y121, and 206–208 (DVD) contribute to the UDP-N-acetyl-alpha-D-galactosamine site. Residues D206 and D208 each contribute to the Mn(2+) site. Positions 228, 240, 298, and 321 each coordinate an alpha-L-fucosyl-(1-&gt;2)-beta-D-galactosyl derivative. The active-site Nucleophile is the E298.

It belongs to the glycosyltransferase 6 family. Mn(2+) serves as cofactor. As to expression, tongue, esophagus, large intestine, stomach, caecum, pancreas, uterus, seminal vesicle, submaxillary gland, parotid gland, thyroid gland, parathyroid gland, salivary gland and thymus (at protein level). Esophagus, large intestine, stomach, kidney, urinary bladder, uterus and thymus.

It is found in the golgi apparatus. The protein resides in the golgi stack membrane. It localises to the secreted. It catalyses the reaction an alpha-L-fucosyl-(1-&gt;2)-beta-D-galactosyl derivative + UDP-N-acetyl-alpha-D-galactosamine = an N-acetyl-alpha-D-galactosaminyl-(1-&gt;3)-[alpha-L-fucosyl-(1-&gt;2)]-beta-D-galactosyl derivative + UDP + H(+). The enzyme catalyses an alpha-L-fucosyl-(1-&gt;2)-beta-D-galactosyl derivative + UDP-alpha-D-galactose = an alpha-D-galactosyl-(1-&gt;3)-[alpha-L-fucosyl-(1-&gt;2)]-beta-D-galactosyl derivative + UDP + H(+). It functions in the pathway protein modification; protein glycosylation. Its function is as follows. Possesses strong A transferase activity and weak B transferase activity. This chain is Histo-blood group ABO system transferase 1 (Abo), found in Rattus norvegicus (Rat).